Here is a 599-residue protein sequence, read N- to C-terminus: Thiamine transporter THI72 (599 aa).

Helical transmembrane passes span 42-62 (WGFWSNFAYWGVLSFNVGMWI), 78-98 (IGAFIIADLLTILFALANSCP), 112-132 (FVFGIYGSALGIIIRILMSIV), 174-194 (LIGFIIFHILTAFCYFMKPYH), 197-217 (YILIWSCVGTFFAMLGMVIYL), 280-300 (IVALLIPATLIPVFGIIGASA), 333-353 (FFCGFCFVMSQISYTISNCGF), 372-392 (GAIFAACVSWACLPWNFYNSS), 395-415 (FLTVMSSFGVVMTPIITVMIC), 447-467 (AIVAWVCGMAPGLPGIAWEVN), and 484-504 (SFFSFLISFFVYWGLCLLFPF). A disordered region spans residues 553–599 (HEYKPESSDDELPELTKTSSENTKVFEIVHQKDNEKESSTSSEKQIA). A phosphoserine mark is found at serine 560 and serine 572. Positions 579–590 (EIVHQKDNEKES) are enriched in basic and acidic residues.

Belongs to the purine-cytosine permease (2.A.39) family.

The protein localises to the membrane. Low affinity thiamine transporter responsible for intake of thiamine. It is possible that the primary function is the uptake of closely related compounds and that thiamine transport is a secondary activity of these proteins. The sequence is that of Thiamine transporter THI72 (THI72) from Saccharomyces cerevisiae (strain ATCC 204508 / S288c) (Baker's yeast).